Reading from the N-terminus, the 317-residue chain is L-lactate dehydrogenase (317 aa).

NAD(+)-binding positions include Val-17, Asp-38, Lys-43, Tyr-69, and Gly-83–Ala-84. Positions 86 and 92 each coordinate substrate. NAD(+) contacts are provided by residues Ser-105, Ala-122 to Asn-124, and Ser-147. Asn-124 to Asp-127 serves as a coordination point for substrate. A substrate-binding site is contributed by Asp-152 to Arg-155. 2 residues coordinate beta-D-fructose 1,6-bisphosphate: Arg-157 and His-172. His-179 serves as the catalytic Proton acceptor. Phosphotyrosine is present on Tyr-224. Thr-233 serves as a coordination point for substrate.

The protein belongs to the LDH/MDH superfamily. LDH family. Homotetramer.

The protein resides in the cytoplasm. It catalyses the reaction (S)-lactate + NAD(+) = pyruvate + NADH + H(+). It participates in fermentation; pyruvate fermentation to lactate; (S)-lactate from pyruvate: step 1/1. Its activity is regulated as follows. Allosterically activated by fructose 1,6-bisphosphate (FBP). Its function is as follows. Catalyzes the conversion of lactate to pyruvate. The chain is L-lactate dehydrogenase from Bacillus velezensis (strain DSM 23117 / BGSC 10A6 / LMG 26770 / FZB42) (Bacillus amyloliquefaciens subsp. plantarum).